A 362-amino-acid chain; its full sequence is Methylthioribose-1-phosphate isomerase (362 aa).

Aspartate 252 serves as the catalytic Proton donor.

This sequence belongs to the eIF-2B alpha/beta/delta subunits family. MtnA subfamily.

Its subcellular location is the cytoplasm. The protein resides in the nucleus. The catalysed reaction is 5-(methylsulfanyl)-alpha-D-ribose 1-phosphate = 5-(methylsulfanyl)-D-ribulose 1-phosphate. It participates in amino-acid biosynthesis; L-methionine biosynthesis via salvage pathway; L-methionine from S-methyl-5-thio-alpha-D-ribose 1-phosphate: step 1/6. Catalyzes the interconversion of methylthioribose-1-phosphate (MTR-1-P) into methylthioribulose-1-phosphate (MTRu-1-P). This is Methylthioribose-1-phosphate isomerase from Drosophila virilis (Fruit fly).